The following is a 122-amino-acid chain: Histone H2B, gonadal (122 aa).

The segment at 1 to 31 (MPPKPSGKGQKKAGKAKGAPRTDKKRRRKRK) is disordered. Pro2 is subject to N,N-dimethylproline. An O-linked (GlcNAc) serine glycan is attached at Ser109. A Glycyl lysine isopeptide (Lys-Gly) (interchain with G-Cter in ubiquitin) cross-link involves residue Lys117.

Belongs to the histone H2B family. As to quaternary structure, the nucleosome is a histone octamer containing two molecules each of H2A, H2B, H3 and H4 assembled in one H3-H4 heterotetramer and two H2A-H2B heterodimers. The octamer wraps approximately 147 bp of DNA. Monoubiquitination of Lys-117 gives a specific tag for epigenetic transcriptional activation and is also prerequisite for histone H3 'Lys-4' and 'Lys-79' methylation. In terms of processing, glcNAcylation at Ser-109 promotes monoubiquitination of Lys-117. It fluctuates in response to extracellular glucose, and associates with transcribed genes.

The protein resides in the nucleus. The protein localises to the chromosome. Its function is as follows. Core component of nucleosome. Nucleosomes wrap and compact DNA into chromatin, limiting DNA accessibility to the cellular machineries which require DNA as a template. Histones thereby play a central role in transcription regulation, DNA repair, DNA replication and chromosomal stability. DNA accessibility is regulated via a complex set of post-translational modifications of histones, also called histone code, and nucleosome remodeling. This Asterias rubens (Common European starfish) protein is Histone H2B, gonadal.